The chain runs to 32 residues: MSDIN-like toxin proprotein 3 (32 aa).

Residues 1–10 (MSDINATRLP) constitute a propeptide that is removed on maturation. Positions 11–17 (VWIGYSP) form a cross-link, cyclopeptide (Val-Pro). The propeptide occupies 18–32 (CVGDDAVALLNRGEG).

It belongs to the MSDIN fungal toxin family. Processed by the macrocyclase-peptidase enzyme POPB to yield a toxic cyclic heptapeptide. POPB first removes 10 residues from the N-terminus. Conformational trapping of the remaining peptide forces the enzyme to release this intermediate rather than proceed to macrocyclization. The enzyme rebinds the remaining peptide in a different conformation and catalyzes macrocyclization of the N-terminal 7 residues.

Probable toxin that belongs to the MSDIN-like toxin family responsible for a large number of food poisoning cases and deaths. The sequence is that of MSDIN-like toxin proprotein 3 from Amanita fuligineoides.